A 368-amino-acid polypeptide reads, in one-letter code: Phospho-N-acetylmuramoyl-pentapeptide-transferase (368 aa).

Helical transmembrane passes span 30-50 (AAAITALLISLMAGPWFIRYL), 72-92 (LPTMGGILIIFSIEVSVFLWA), 98-118 (HVWLVMLAIFWMGLIGFIDDY), 139-159 (ISLGLVIGLYTWFDPAFAVLL), 170-190 (LSIDYGIFYIPIVIFIITAVS), 201-221 (GLASGTTAIVVSALGAFSYLA), 238-258 (GGEIAVVCMAIVMACVGFLWF), 264-286 (EIIMGDTGSLALGSAVAVIALLI), and 345-365 (KIVIRFWIISILFFLTSLMTL).

The protein belongs to the glycosyltransferase 4 family. MraY subfamily. Mg(2+) is required as a cofactor.

The protein resides in the cell inner membrane. It carries out the reaction UDP-N-acetyl-alpha-D-muramoyl-L-alanyl-gamma-D-glutamyl-meso-2,6-diaminopimeloyl-D-alanyl-D-alanine + di-trans,octa-cis-undecaprenyl phosphate = di-trans,octa-cis-undecaprenyl diphospho-N-acetyl-alpha-D-muramoyl-L-alanyl-D-glutamyl-meso-2,6-diaminopimeloyl-D-alanyl-D-alanine + UMP. Its pathway is cell wall biogenesis; peptidoglycan biosynthesis. Its function is as follows. Catalyzes the initial step of the lipid cycle reactions in the biosynthesis of the cell wall peptidoglycan: transfers peptidoglycan precursor phospho-MurNAc-pentapeptide from UDP-MurNAc-pentapeptide onto the lipid carrier undecaprenyl phosphate, yielding undecaprenyl-pyrophosphoryl-MurNAc-pentapeptide, known as lipid I. The polypeptide is Phospho-N-acetylmuramoyl-pentapeptide-transferase (Chlorobium phaeobacteroides (strain DSM 266 / SMG 266 / 2430)).